The chain runs to 431 residues: Enolase (431 aa).

Q167 lines the (2R)-2-phosphoglycerate pocket. Residue E209 is the Proton donor of the active site. Mg(2+)-binding residues include D246, E289, and D316. The (2R)-2-phosphoglycerate site is built by K341, R370, S371, and K392. K341 serves as the catalytic Proton acceptor.

Belongs to the enolase family. Component of the RNA degradosome, a multiprotein complex involved in RNA processing and mRNA degradation. Mg(2+) is required as a cofactor.

The protein resides in the cytoplasm. The protein localises to the secreted. It is found in the cell surface. It catalyses the reaction (2R)-2-phosphoglycerate = phosphoenolpyruvate + H2O. It participates in carbohydrate degradation; glycolysis; pyruvate from D-glyceraldehyde 3-phosphate: step 4/5. Functionally, catalyzes the reversible conversion of 2-phosphoglycerate (2-PG) into phosphoenolpyruvate (PEP). It is essential for the degradation of carbohydrates via glycolysis. This Shewanella baltica (strain OS223) protein is Enolase.